A 324-amino-acid polypeptide reads, in one-letter code: Probable tRNA pseudouridine synthase B (324 aa).

Residue Asp-72 is the Nucleophile of the active site. A PUA domain is found at 239-314 (LPRVVILDSA…LVIETRKVFM (76 aa)).

The protein belongs to the pseudouridine synthase TruB family. Type 2 subfamily.

It carries out the reaction uridine(55) in tRNA = pseudouridine(55) in tRNA. In terms of biological role, could be responsible for synthesis of pseudouridine from uracil-55 in the psi GC loop of transfer RNAs. In Methanothermobacter thermautotrophicus (strain ATCC 29096 / DSM 1053 / JCM 10044 / NBRC 100330 / Delta H) (Methanobacterium thermoautotrophicum), this protein is Probable tRNA pseudouridine synthase B.